The sequence spans 972 residues: MAAVMAAPEPAEAPSSLLLLVVGGECGCPGLLAYVLEELERGVRSWEDVDPDVCSLDEQLKAFVSRHSATFSSIVKGQRSLHHRGETLETLVLLNPSDKSLCDELRNLLMDPAPHKLLVLAGPCLEETGELLLQTGGFSAHHFLQVLGDKEVQDALASAPAAPALTVSCPTFGDWALLGPAPGLRLRLNPPARLPSSEGLRAFLEYVAESLEPPSPFELLEPPATGGFLRLARPCCYVFPGGLGDAAFFAVNGFTVLVNGGSNPKSSFWKLVRHLDRVDAVLVTHAGADSLPGLNSLLRRKLAEREAAAGPQGQHEERLRRLLSPALGVVFLNAREAGSRLRGGEDEAVCARSLLRSLGIVPLPLQRGPQPSCPTVLFEKLGVGRLELFVLHPPPGDPAAPACALLVWQPAAPGDKVVRVLFPGRTPPARLLDGLQRLQHLPCLRRPVVTTQDLEVPSRANSQDSLASRDSTRKEPVRGTVGATSRSAVRREPALATRDQKKDTKPGPTRSTVRDVRRSGPGVVTTKPRVSQNGPRAPVPAAPPAAPAPEFPGEAENIVESERPPAPSPTLSPAQSPPPTAPGNSPERLSLSPLRPEPAPDASPSATTPTLTTPSLPAELGSPHSTEVDESLSVSFEQVLPAGDAGLSLPLRLARRSTSPHDVDLCLVSPCEFSHRKPPPPASPGSSDSSARSQERPPETPPTSVSESLPTLSDSDPVPVADSDDDAGSESAARDPLPTPRVPPPLPDAPGICMVDPEALPPRARQPLSTANSSRGRKAPARPSSASAAPRAATVAAKTKGPVGDRSRPLSARSEPADKPGRVPLTRKPSVPKTVPKMASATRNSSGPSSRPAPLAAGSPVYLDLAYLPGGGAGHLDQNFFLRVRALCYVISGQGQRQEEGLRGVLDALLAGKRQWDLDLQVTLIPTFDSAVMHRWYEETHEQHQALGIRVLGSGSLVSMQDEAFPACKVEF.

Residues 1–715 (MAAVMAAPEP…SESLPTLSDS (715 aa)) are necessary for the microtubule-organizing center localization. Positions 454–469 (LEVPSRANSQDSLASR) are enriched in polar residues. The tract at residues 454 to 632 (LEVPSRANSQ…PHSTEVDESL (179 aa)) is disordered. Position 462 is a phosphoserine (Ser462). Over residues 489–505 (VRREPALATRDQKKDTK) the composition is skewed to basic and acidic residues. 2 stretches are compositionally biased toward pro residues: residues 537–550 (APVP…PAPE) and 564–581 (PPAP…PPTA). Phosphoserine occurs at positions 585, 590, and 592. A necessary for interaction with RASSF1 region spans residues 600–972 (PDASPSATTP…EAFPACKVEF (373 aa)). Positions 602-620 (ASPSATTPTLTTPSLPAEL) are enriched in low complexity. Residues 644–879 (DAGLSLPLRL…GGGAGHLDQN (236 aa)) form a necessary for association with microtubules region. Phosphoserine occurs at positions 659 and 683. The tract at residues 671-854 (CEFSHRKPPP…SSGPSSRPAP (184 aa)) is disordered. Low complexity predominate over residues 702-721 (PTSVSESLPTLSDSDPVPVA). Ser723 is subject to Phosphoserine. Residues 737–748 (LPTPRVPPPLPD) show a composition bias toward pro residues. Over residues 781 to 800 (ARPSSASAAPRAATVAAKTK) the composition is skewed to low complexity. Residues 874-972 (GHLDQNFFLR…EAFPACKVEF (99 aa)) are necessary for association with actin. Residues 880 to 904 (FFLRVRALCYVISGQGQRQEEGLRG) form a necessary for the mitochondrial aggregation and genome destruction region.

Belongs to the MAP1A/MAP1B/MAP1S family. Heterodimer of a heavy and a light chain. Interacts with microtubules and actin. Both MAP1S heavy and light chains interact with microtubules. MAP1S light chain interacts with actin. Interacts with LRPPRC, RASSF1, microtubules and VCY2. Interacts (via C-terminus) with GAN (via Kelch domains). Interacts with WDR47 (via N-terminus of light chain). Interacts with ESR1. Expressed in cortex cerebellum, dorsal root ganglia, frontal cortex, hippocampus, hypothalamus, mesencephalon, medulla oblongata, occipital cortex, pons, spinal cord, striatum of the brain, neurons, heart, testis and skeletal muscle (at protein level).

It localises to the nucleus. It is found in the cytoplasm. Its subcellular location is the cytosol. The protein resides in the cytoskeleton. The protein localises to the spindle. In terms of biological role, microtubule-associated protein that mediates aggregation of mitochondria resulting in cell death and genomic destruction (MAGD). Plays a role in anchoring the microtubule organizing center to the centrosomes. Binds to DNA. Plays a role in apoptosis. Involved in the formation of microtubule bundles. This is Microtubule-associated protein 1S (Map1s) from Rattus norvegicus (Rat).